The sequence spans 355 residues: UDP-N-acetylglucosamine--N-acetylmuramyl-(pentapeptide) pyrophosphoryl-undecaprenol N-acetylglucosamine transferase (355 aa).

UDP-N-acetyl-alpha-D-glucosamine-binding positions include 13-15 (TGG), asparagine 125, arginine 162, serine 190, isoleucine 244, and glutamine 289.

Belongs to the glycosyltransferase 28 family. MurG subfamily.

It localises to the cell inner membrane. It catalyses the reaction di-trans,octa-cis-undecaprenyl diphospho-N-acetyl-alpha-D-muramoyl-L-alanyl-D-glutamyl-meso-2,6-diaminopimeloyl-D-alanyl-D-alanine + UDP-N-acetyl-alpha-D-glucosamine = di-trans,octa-cis-undecaprenyl diphospho-[N-acetyl-alpha-D-glucosaminyl-(1-&gt;4)]-N-acetyl-alpha-D-muramoyl-L-alanyl-D-glutamyl-meso-2,6-diaminopimeloyl-D-alanyl-D-alanine + UDP + H(+). It functions in the pathway cell wall biogenesis; peptidoglycan biosynthesis. Functionally, cell wall formation. Catalyzes the transfer of a GlcNAc subunit on undecaprenyl-pyrophosphoryl-MurNAc-pentapeptide (lipid intermediate I) to form undecaprenyl-pyrophosphoryl-MurNAc-(pentapeptide)GlcNAc (lipid intermediate II). The protein is UDP-N-acetylglucosamine--N-acetylmuramyl-(pentapeptide) pyrophosphoryl-undecaprenol N-acetylglucosamine transferase of Neisseria gonorrhoeae (strain ATCC 700825 / FA 1090).